The chain runs to 190 residues: Membrane protein FAM174A (190 aa).

The first 29 residues, 1-29 (MPTRRGCSGPCHFLASAFVLLLLPALNQS), serve as a signal peptide directing secretion. N-linked (GlcNAc...) asparagine glycosylation is found at Asn27 and Asn83. The Extracellular segment spans residues 30 to 123 (VVLPSTVPRA…NPSDKPMTQR (94 aa)). Residues 37–119 (PRAVQESKPL…AVSPNPSDKP (83 aa)) form a disordered region. Residues 124 to 144 (ALTVLVVVSAAVLVYFVVRTV) form a helical membrane-spanning segment. The Cytoplasmic segment spans residues 145-190 (RMRRRNRKTRRYGVLDTNIENMELTPLEQDDEDDDNTLFDANHPRR). The interval 168–190 (LTPLEQDDEDDDNTLFDANHPRR) is disordered. Acidic residues predominate over residues 172–181 (EQDDEDDDNT).

Belongs to the FAM174 family.

It is found in the membrane. The polypeptide is Membrane protein FAM174A (Fam174a) (Rattus norvegicus (Rat)).